The chain runs to 276 residues: Bis(5'-nucleosyl)-tetraphosphatase, symmetrical (276 aa).

The protein belongs to the Ap4A hydrolase family.

It catalyses the reaction P(1),P(4)-bis(5'-adenosyl) tetraphosphate + H2O = 2 ADP + 2 H(+). Hydrolyzes diadenosine 5',5'''-P1,P4-tetraphosphate to yield ADP. The chain is Bis(5'-nucleosyl)-tetraphosphatase, symmetrical from Dechloromonas aromatica (strain RCB).